A 504-amino-acid polypeptide reads, in one-letter code: Zinc finger protein AEBP2 (504 aa).

The tract at residues 1–219 is disordered; sequence MAAALADMAD…SRMDSEDSIS (219 aa). At A2 the chain carries N-acetylalanine. The segment covering 16-30 has biased composition (low complexity); it reads RLSPLSPGSPGPAAR. A phosphoserine mark is found at S18, S21, and S24. Positions 36–49 are enriched in acidic residues; the sequence is PEEEEEEDDEEAEA. The segment covering 59–69 has biased composition (gly residues); it reads GGAGGGAGGGE. Residues 86 to 110 show a composition bias toward acidic residues; it reads GDEDEDEEDDEDEGSSSGGAEEESS. Over residues 129–140 the composition is skewed to low complexity; the sequence is SLSPGAASSSSG. S131 carries the phosphoserine modification. Positions 142–153 are enriched in basic and acidic residues; that stretch reads GDGKEGLEEPKG. Composition is skewed to gly residues over residues 154–168 and 178–189; these read PRGG…GGGS and GDEGYGTGGGGS. 3 positions are modified to phosphoserine: S199, S203, and S204. The interval 202-287 is interaction with RBBP4; that stretch reads MSSDGEPLSR…IHVDGQRGGV (86 aa). The C2H2-type 1 zinc-finger motif lies at 254–279; that stretch reads YNCCWDQCQACFNSSPDLADHIRSIH. The C2H2-type 2; degenerate zinc-finger motif lies at 293–315; it reads KGCKVYNTPSTSQSWLQRHMLTH. The C2H2-type 3 zinc finger occupies 321–345; that stretch reads FKCVVGGCNASFASQGGLARHVPTH. The segment covering 345–358 has biased composition (polar residues); the sequence is HFSQQNSSKVSSQP. A disordered region spans residues 345–387; sequence HFSQQNSSKVSSQPKAKEESPSKAGMNKRRKLKNKRRRSLPRP. The segment covering 370-385 has biased composition (basic residues); it reads MNKRRKLKNKRRRSLP. Phosphoserine is present on S383. Residues 400 to 471 are interaction with SUZ12; sequence RHRAICFNLS…QLKTKVVHLS (72 aa). The tract at residues 488-504 is important for nucleosome binding activity of the PRC2 complex; sequence TMPQKRLKRFDILNFPR.

This sequence belongs to the AEBP2/jing C2H2-type zinc-finger family. As to quaternary structure, self-associates. Associates with the PRC2 complex, which consists of the core components EED, EZH1 or EZH2, SUZ12, and RBBP4, and various combinations of accessory subunits including AEBP2, JARID2, PHF19, MTF2 and EPOP. Found in a monomeric PRC2.2 (class 2) complex consisting of at least SUZ12, RBBP4, AEBP2 and JARID2. Within the PRC2 complex, interacts directly with SUZ12; competes with PHF19 for SUZ12 binding. Interacts with EED, EZH2, and RBBP4. May also interact with RBBP7. Expressed in brain, brown adipose tissue, white adipose tissue, heart, kidney, lung, skeletal muscle, small intestine and spleen. Expressed at low levels in liver.

It localises to the nucleus. Its function is as follows. Acts as an accessory subunit for the core Polycomb repressive complex 2 (PRC2), which mediates histone H3K27 (H3K27me3) trimethylation on chromatin leading to transcriptional repression of the affected target gene. Plays a role in nucleosome localization of the PRC2 complex. The protein is Zinc finger protein AEBP2 (Aebp2) of Mus musculus (Mouse).